Here is a 323-residue protein sequence, read N- to C-terminus: Acetyl-coenzyme A carboxylase carboxyl transferase subunit alpha (323 aa).

A CoA carboxyltransferase C-terminal domain is found at 40–293 (LSEKSLQLTK…RKALSDSLKT (254 aa)).

It belongs to the AccA family. In terms of assembly, acetyl-CoA carboxylase is a heterohexamer composed of biotin carboxyl carrier protein (AccB), biotin carboxylase (AccC) and two subunits each of ACCase subunit alpha (AccA) and ACCase subunit beta (AccD).

It is found in the cytoplasm. It carries out the reaction N(6)-carboxybiotinyl-L-lysyl-[protein] + acetyl-CoA = N(6)-biotinyl-L-lysyl-[protein] + malonyl-CoA. It functions in the pathway lipid metabolism; malonyl-CoA biosynthesis; malonyl-CoA from acetyl-CoA: step 1/1. Component of the acetyl coenzyme A carboxylase (ACC) complex. First, biotin carboxylase catalyzes the carboxylation of biotin on its carrier protein (BCCP) and then the CO(2) group is transferred by the carboxyltransferase to acetyl-CoA to form malonyl-CoA. The sequence is that of Acetyl-coenzyme A carboxylase carboxyl transferase subunit alpha from Polynucleobacter asymbioticus (strain DSM 18221 / CIP 109841 / QLW-P1DMWA-1) (Polynucleobacter necessarius subsp. asymbioticus).